We begin with the raw amino-acid sequence, 1032 residues long: Caspase recruitment domain-containing protein 10 (1032 aa).

3 disordered regions span residues 1-23 (MPGRAEAGEAEEEAGAGSGSEAE), 253-276 (RARGPPPGAEEKEKEKEKEKEPDN), and 481-553 (EFPS…MSDI). A Phosphoserine modification is found at Ser-18. A CARD domain is found at 23–115 (EEDALWERIE…EHFTLLTGQE (93 aa)). Residues 138–456 (TEVRRLREAR…LEVQLQRAQG (319 aa)) are a coiled coil. 2 stretches are compositionally biased toward basic and acidic residues: residues 261–276 (AEEKEKEKEKEKEPDN) and 504–517 (HNSEEATDSEKEIN).

In terms of assembly, CARD10 and BCL10 bind to each other by CARD-CARD interaction. They both participate in a complex with MALT1, where MALT1 binds to BCL10. Interacts with TMEM43; this interaction is essential for EGFR-mediated NF-kappa-B activation. Detected in adult heart, kidney and liver; lower levels in intestine, placenta, muscle and lung. Also found in fetal lung, liver and kidney.

It localises to the cytoplasm. In terms of biological role, scaffold protein that plays an important role in mediating the activation of NF-kappa-B via BCL10 or EGFR. This chain is Caspase recruitment domain-containing protein 10 (CARD10), found in Homo sapiens (Human).